The following is a 129-amino-acid chain: Small ribosomal subunit protein uS11 (129 aa).

It belongs to the universal ribosomal protein uS11 family. In terms of assembly, part of the 30S ribosomal subunit. Interacts with proteins S7 and S18. Binds to IF-3.

In terms of biological role, located on the platform of the 30S subunit, it bridges several disparate RNA helices of the 16S rRNA. Forms part of the Shine-Dalgarno cleft in the 70S ribosome. In Pseudomonas fluorescens (strain SBW25), this protein is Small ribosomal subunit protein uS11.